Reading from the N-terminus, the 957-residue chain is MYGSARTITNLEGSPSRSPRLPRSPRLGHRRTSSGGGGGTGKTLSMENIQSLNAAYATSGPMYLSDHEGVASTTYPKGTMTLGRATNRAVYGGRVTAMGSSPNIASAGLSHTDVLSYTDQHGGLTGSSHHHHHQVPSMLRQVRDSTMLDLQAQLKELQRENDLLRKELDIKDSKLGSSMNSIKTFWSPELKKERVLRKEEAARMSVLKEQMRVSHEENQHLQLTIQALQDELRTQRDLNHLLQQESGNRGAEHFTIELTEENFRRLQAEHDRQAKELFLLRKTLEEMELRIETQKQTLNARDESIKKLLEMLQSKGLPSKSLEDDNERTRRMAEAESQVSHLEVILDQKEKENIHLREELHRRSQLQPEPAKTKALQTVIEMKDTKIASLERNIRDLEDEIQMLKANGVLNTEDREEEIKQIEVYKSHSKFMKTKIDQLKQELSKKESELLALQTKLETLSNQNSDCKQHIEVLKESLTAKEQRAAILQTEVDALRLRLEEKESFLNKKTKQLQDLTEEKGTLAGEIRDMKDMLEVKERKINVLQKKIENLQEQLRDKDKQLTNLKDRVKSLQTDSSNTDTALATLEEALSEKERIIERLKEQRERDDRERLEEIESFRKENKDLKEKVNALQAELTEKESSLIDLKEHASSLASAGLKRDSKLKSLEIAIEQKKEECSKLEAQLKKAHNIEDDSRMNPEFADQIKQLDKEASYYRDECGKAQAEVDRLLEILKEVENEKNDKDKKIAELESLTLRHMKDQNKKVANLKHNQQLEKKKNAQLLEEVRRREDSMADNSQHLQIEELMNALEKTRQELDATKARLASTQQSLAEKEAHLANLRIERRKQLEEILEMKQEALLAAISEKDANIALLELSASKKKKTQEEVMALKREKDRLVHQLKQQTQNRMKLMADNYDDDHHHYHHHHHHHHHRSPGRSQHSNHRPSPDQDDEEGIWA.

Polar residues predominate over residues 1–13 (MYGSARTITNLEG). The disordered stretch occupies residues 1–44 (MYGSARTITNLEGSPSRSPRLPRSPRLGHRRTSSGGGGGTGKTL). Low complexity predominate over residues 14 to 25 (SPSRSPRLPRSP). 2 positions are modified to phosphoserine: serine 65 and serine 666. Residues 140 to 917 (RQVRDSTMLD…RMKLMADNYD (778 aa)) adopt a coiled-coil conformation. The segment at 918 to 957 (DDHHHYHHHHHHHHHRSPGRSQHSNHRPSPDQDDEEGIWA) is disordered. Basic residues predominate over residues 922 to 943 (HYHHHHHHHHHRSPGRSQHSNH). Over residues 948-957 (DQDDEEGIWA) the composition is skewed to acidic residues.

In terms of assembly, interacts with BSN, ERC1, PPFIA1, PPFIA2, PPFIA3 and PPFIA4. Interacts through its C-terminus with the PDZ domain of RIMS1. Part of a complex consisting of ERC2, RIMS1 and UNC13A.

It is found in the cytoplasm. The protein localises to the synapse. It localises to the presynaptic active zone. Its subcellular location is the cytoskeleton. Functionally, thought to be involved in the organization of the cytomatrix at the nerve terminals active zone (CAZ) which regulates neurotransmitter release. Seems to act together with BSN. May recruit liprin-alpha proteins to the CAZ. The protein is ERC protein 2 (ERC2) of Homo sapiens (Human).